A 725-amino-acid chain; its full sequence is Catalase-peroxidase (725 aa).

Positions 88–211 form a cross-link, tryptophyl-tyrosyl-methioninium (Trp-Tyr) (with M-237); sequence WHSAGTYRIQ…LAASEMGLIY (124 aa). H89 serves as the catalytic Proton acceptor. A cross-link (tryptophyl-tyrosyl-methioninium (Tyr-Met) (with W-88)) is located at residues 211-237; the sequence is YVNPEGPGREPDPLKAAQQIRETFKRM. H252 serves as a coordination point for heme b.

It belongs to the peroxidase family. Peroxidase/catalase subfamily. As to quaternary structure, homodimer or homotetramer. Heme b is required as a cofactor. Post-translationally, formation of the three residue Trp-Tyr-Met cross-link is important for the catalase, but not the peroxidase activity of the enzyme.

The catalysed reaction is H2O2 + AH2 = A + 2 H2O. It catalyses the reaction 2 H2O2 = O2 + 2 H2O. Bifunctional enzyme with both catalase and broad-spectrum peroxidase activity. This Symbiobacterium thermophilum (strain DSM 24528 / JCM 14929 / IAM 14863 / T) protein is Catalase-peroxidase.